The primary structure comprises 355 residues: Cyclin-D1-binding protein 1 (355 aa).

Ala2 is modified (N-acetylalanine). 2 interaction with TCF3 regions span residues 2–181 (ASST…VDLV) and 147–355 (ISCN…AVEL). Positions 2 to 187 (ASSTTPVSFL…VDLVKDAHEE (186 aa)) are interaction with RPLP0. The segment at 2-205 (ASSTTPVSFL…DPYCGLLDDS (204 aa)) is required for interaction with CCND1. Residues 203–224 (DDSEDNSDSHHNEDGVGLPSNR) form a disordered region. The tract at residues 235–355 (LITPCLALVR…KELTQRAVEL (121 aa)) is interaction with RPLP0.

This sequence belongs to the CCNDBP1 family. Interacts with CCND1 and GRAP2. May also interact with COPS5, RPLP0, SIRT6, SYF2 and TCF3. Phosphorylated.

The protein localises to the cytoplasm. Its subcellular location is the nucleus. Its function is as follows. May negatively regulate cell cycle progression. May act at least in part via inhibition of the cyclin-D1/CDK4 complex, thereby preventing phosphorylation of RB1 and blocking E2F-dependent transcription. This chain is Cyclin-D1-binding protein 1 (Ccndbp1), found in Rattus norvegicus (Rat).